A 364-amino-acid polypeptide reads, in one-letter code: Peptide chain release factor 1 (364 aa).

Q237 bears the N5-methylglutamine mark.

This sequence belongs to the prokaryotic/mitochondrial release factor family. In terms of processing, methylated by PrmC. Methylation increases the termination efficiency of RF1.

The protein resides in the cytoplasm. Functionally, peptide chain release factor 1 directs the termination of translation in response to the peptide chain termination codons UAG and UAA. This is Peptide chain release factor 1 from Mycoplasma mycoides subsp. mycoides SC (strain CCUG 32753 / NCTC 10114 / PG1).